The sequence spans 101 residues: Small ribosomal subunit protein uS14 (101 aa).

It belongs to the universal ribosomal protein uS14 family. In terms of assembly, part of the 30S ribosomal subunit. Contacts proteins S3 and S10.

In terms of biological role, binds 16S rRNA, required for the assembly of 30S particles and may also be responsible for determining the conformation of the 16S rRNA at the A site. The chain is Small ribosomal subunit protein uS14 from Aeromonas salmonicida (strain A449).